Here is a 493-residue protein sequence, read N- to C-terminus: MDGIFCALPLSLLLLLQSCGVWGAPPQPRGTLCRTKPTDLVFIIDSSRSVRPQEFEKVKVFLSRVIEGLDVGPNSTRVGVINYASAVKNEFSLKTHQTKAELLQAVQRIEPLSTGTMTGLAIQFAISRAFSDTEGARLRSPNINKVAIVVTDGRPQDGVQDVSARARQAGIEIFAIGVGRVDMHTLRQIASEPLDDHVDYVESYSVIEKLTHKFQEAFCVVSDLCATGDHDCEQICISTPGSYKCACKEGFTLNNDGKTCSACSGGSGSALDLVFLIDGSKSVRPENFELVKKFINQIVESLEVSEKQAQVGLVQYSSSVRQEFPLGQFKNKKDIKAAVKKMAYMEKGTMTGQALKYLVDSSFSIANGARPGVPKVGIVFTDGRSQDYITDAAKKAKDLGFRMFAVGVGNAVEDELREIASEPVAEHYFYTADFRTISNIGKKLQMKICVEEDPCECKSIVKFQTKVEELINTLQQKLEAVAKRIEALENKII.

An N-terminal signal peptide occupies residues 1 to 23 (MDGIFCALPLSLLLLLQSCGVWG). The region spanning 24–220 (APPQPRGTLC…THKFQEAFCV (197 aa)) is the VWFA 1 domain. Asn74 carries N-linked (GlcNAc...) asparagine glycosylation. The region spanning 221–261 (VSDLCATGDHDCEQICISTPGSYKCACKEGFTLNNDGKTCS) is the EGF-like domain. 3 disulfides stabilise this stretch: Cys225/Cys236, Cys232/Cys245, and Cys247/Cys260. The VWFA 2 domain occupies 262 to 450 (ACSGGSGSAL…GKKLQMKICV (189 aa)). The stretch at 462–492 (KFQTKVEELINTLQQKLEAVAKRIEALENKI) forms a coiled coil.

As to quaternary structure, homotrimer. Expressed in xyphoid cartilage and chondrocytes (at protein level).

It localises to the secreted. Its subcellular location is the extracellular space. It is found in the extracellular matrix. Functionally, a major component of the extracellular matrix of non-articular cartilage. Binds to type 2 collagens and forms long concatenated protein networks as part of the extracellular matrix. Required for the network-like organization and bundling of collagen fibrils surrounding chondrocytes in the zones of maturation and hypertrophy. Required for mechanotransduction and adaption to mechanical loading in cartilage chondrocytes, resulting in an increase in expression of the extracellular matrix components ACAN and COL2A1. Acts as a moderator of angiogenesis in response to injury. This Gallus gallus (Chicken) protein is Matrilin-1.